The sequence spans 389 residues: Probable dual-specificity RNA methyltransferase RlmN (389 aa).

A disordered region spans residues 1-23; the sequence is MTTQHPDTPETGITPGGTSGAFR. Glu127 (proton acceptor) is an active-site residue. Positions 133–376 constitute a Radical SAM core domain; sequence YPTRTTLCIS…ATLRDTRGQD (244 aa). Cys140 and Cys381 are joined by a disulfide. [4Fe-4S] cluster-binding residues include Cys147, Cys151, and Cys154. Residues 202-203, Ser236, 259-261, and Asn338 contribute to the S-adenosyl-L-methionine site; these read GE and SLH. The S-methylcysteine intermediate role is filled by Cys381.

It belongs to the radical SAM superfamily. RlmN family. [4Fe-4S] cluster serves as cofactor.

The protein localises to the cytoplasm. It carries out the reaction adenosine(2503) in 23S rRNA + 2 reduced [2Fe-2S]-[ferredoxin] + 2 S-adenosyl-L-methionine = 2-methyladenosine(2503) in 23S rRNA + 5'-deoxyadenosine + L-methionine + 2 oxidized [2Fe-2S]-[ferredoxin] + S-adenosyl-L-homocysteine. The catalysed reaction is adenosine(37) in tRNA + 2 reduced [2Fe-2S]-[ferredoxin] + 2 S-adenosyl-L-methionine = 2-methyladenosine(37) in tRNA + 5'-deoxyadenosine + L-methionine + 2 oxidized [2Fe-2S]-[ferredoxin] + S-adenosyl-L-homocysteine. In terms of biological role, specifically methylates position 2 of adenine 2503 in 23S rRNA and position 2 of adenine 37 in tRNAs. This is Probable dual-specificity RNA methyltransferase RlmN from Bifidobacterium longum (strain NCC 2705).